We begin with the raw amino-acid sequence, 121 residues long: Protein AC4 (121 aa).

Residues 11 to 30 (RGQSSNPHTSESQERNIQTG) are disordered. Residues 12 to 30 (GQSSNPHTSESQERNIQTG) are compositionally biased toward polar residues.

The protein belongs to the geminiviridae protein AC4/C4 family.

In terms of biological role, pathogenicity determinant. May act as a suppressor of RNA-mediated gene silencing, also known as post-transcriptional gene silencing (PTGS), a mechanism of plant viral defense that limits the accumulation of viral RNAs. This Cabbage leaf curl virus (isolate Jamaica) (CaLCuV) protein is Protein AC4.